Here is a 1217-residue protein sequence, read N- to C-terminus: Valine--tRNA ligase (1217 aa).

The GST C-terminal domain occupies 27-155; the sequence is NAKQQSQVWQ…ISLCEKMVPV (129 aa). The short motif at 293–303 is the 'HIGH' region element; that stretch reads PNVTGSLHLGH. A 'KMSKS' region motif is present at residues 809 to 813; the sequence is KMSKS. Lysine 812 is a binding site for ATP.

It belongs to the class-I aminoacyl-tRNA synthetase family.

It catalyses the reaction tRNA(Val) + L-valine + ATP = L-valyl-tRNA(Val) + AMP + diphosphate. This is Valine--tRNA ligase (vars1) from Takifugu rubripes (Japanese pufferfish).